The sequence spans 460 residues: Bifunctional protein GlmU (460 aa).

A pyrophosphorylase region spans residues 1-229 (MTNYAIILAA…FNESLGVNDR (229 aa)). Residues 8–11 (LAAG), Lys-22, Gln-72, and 77–78 (GT) contribute to the UDP-N-acetyl-alpha-D-glucosamine site. Asp-102 serves as a coordination point for Mg(2+). Residues Gly-139, Glu-154, Asn-169, and Asn-227 each contribute to the UDP-N-acetyl-alpha-D-glucosamine site. Residue Asn-227 coordinates Mg(2+). Residues 230–250 (VALATAETVMRQRITQKHMVN) form a linker region. Residues 251–460 (GVTFQNPETV…RLAHHPSRSK (210 aa)) are N-acetyltransferase. Residues Arg-332 and Lys-350 each contribute to the UDP-N-acetyl-alpha-D-glucosamine site. His-362 acts as the Proton acceptor in catalysis. Tyr-365 and Asn-376 together coordinate UDP-N-acetyl-alpha-D-glucosamine. Residues Ala-379, 385-386 (NY), Ser-404, Ala-422, and Arg-439 contribute to the acetyl-CoA site.

It in the N-terminal section; belongs to the N-acetylglucosamine-1-phosphate uridyltransferase family. The protein in the C-terminal section; belongs to the transferase hexapeptide repeat family. In terms of assembly, homotrimer. Requires Mg(2+) as cofactor.

The protein resides in the cytoplasm. It catalyses the reaction alpha-D-glucosamine 1-phosphate + acetyl-CoA = N-acetyl-alpha-D-glucosamine 1-phosphate + CoA + H(+). The catalysed reaction is N-acetyl-alpha-D-glucosamine 1-phosphate + UTP + H(+) = UDP-N-acetyl-alpha-D-glucosamine + diphosphate. It functions in the pathway nucleotide-sugar biosynthesis; UDP-N-acetyl-alpha-D-glucosamine biosynthesis; N-acetyl-alpha-D-glucosamine 1-phosphate from alpha-D-glucosamine 6-phosphate (route II): step 2/2. It participates in nucleotide-sugar biosynthesis; UDP-N-acetyl-alpha-D-glucosamine biosynthesis; UDP-N-acetyl-alpha-D-glucosamine from N-acetyl-alpha-D-glucosamine 1-phosphate: step 1/1. The protein operates within bacterial outer membrane biogenesis; LPS lipid A biosynthesis. Its function is as follows. Catalyzes the last two sequential reactions in the de novo biosynthetic pathway for UDP-N-acetylglucosamine (UDP-GlcNAc). The C-terminal domain catalyzes the transfer of acetyl group from acetyl coenzyme A to glucosamine-1-phosphate (GlcN-1-P) to produce N-acetylglucosamine-1-phosphate (GlcNAc-1-P), which is converted into UDP-GlcNAc by the transfer of uridine 5-monophosphate (from uridine 5-triphosphate), a reaction catalyzed by the N-terminal domain. The polypeptide is Bifunctional protein GlmU (Streptococcus pyogenes serotype M28 (strain MGAS6180)).